Here is a 182-residue protein sequence, read N- to C-terminus: UPF0397 protein YdcD (182 aa).

Transmembrane regions (helical) follow at residues 8 to 28, 42 to 62, 74 to 94, 114 to 134, and 146 to 166; these read IVVATGIGAALFVIIGWLINI, AVLALFSALFGPLAGFLIGFI, APWWTWVLGSGLIGLFLAFGV, IVQFLANVVVWGIIAPIGDVL, and QGIVAGLVNALTIAVAGTLLL.

This sequence belongs to the UPF0397 family.

The protein resides in the cell membrane. The sequence is that of UPF0397 protein YdcD (ydcD) from Lactococcus lactis subsp. lactis (strain IL1403) (Streptococcus lactis).